A 497-amino-acid chain; its full sequence is Putative aldehyde dehydrogenase AldA (497 aa).

Residue 213 to 219 (GKGSESG) participates in NAD(+) binding. Catalysis depends on residues glutamate 257 and cysteine 291.

Belongs to the aldehyde dehydrogenase family.

It carries out the reaction an aldehyde + NAD(+) + H2O = a carboxylate + NADH + 2 H(+). In Staphylococcus haemolyticus (strain JCSC1435), this protein is Putative aldehyde dehydrogenase AldA (aldA).